Consider the following 467-residue polypeptide: Venom serine carboxypeptidase (467 aa).

An N-terminal signal peptide occupies residues 1-18 (MKKLVLLQFLFFISFARG). N-linked (GlcNAc...) asparagine glycosylation is found at asparagine 130 and asparagine 169. Serine 202 is an active-site residue. N-linked (GlcNAc...) asparagine glycosylation is found at asparagine 304, asparagine 322, and asparagine 344. Active-site residues include aspartate 387 and histidine 444.

This sequence belongs to the peptidase S10 family. Expressed by the venom duct.

The protein resides in the secreted. The catalysed reaction is Release of a C-terminal amino acid with broad specificity.. This is Venom serine carboxypeptidase from Apis mellifera (Honeybee).